The following is a 323-amino-acid chain: tRNA U34 carboxymethyltransferase (323 aa).

Carboxy-S-adenosyl-L-methionine-binding positions include K91, W105, K110, G130, 152 to 154 (DPT), 181 to 182 (IE), M196, Y200, and R315.

Belongs to the class I-like SAM-binding methyltransferase superfamily. CmoB family. As to quaternary structure, homotetramer.

The catalysed reaction is carboxy-S-adenosyl-L-methionine + 5-hydroxyuridine(34) in tRNA = 5-carboxymethoxyuridine(34) in tRNA + S-adenosyl-L-homocysteine + H(+). In terms of biological role, catalyzes carboxymethyl transfer from carboxy-S-adenosyl-L-methionine (Cx-SAM) to 5-hydroxyuridine (ho5U) to form 5-carboxymethoxyuridine (cmo5U) at position 34 in tRNAs. The polypeptide is tRNA U34 carboxymethyltransferase (Salmonella paratyphi B (strain ATCC BAA-1250 / SPB7)).